We begin with the raw amino-acid sequence, 250 residues long: ATP synthase subunit a (250 aa).

The next 6 helical transmembrane spans lie at 29–49 (ASLF…FATS), 84–104 (FFPL…LGMF), 114–134 (IIVT…YGFY), 143–163 (VFVP…IEII), 193–213 (FVAS…LPLI), and 216–236 (VALT…FAVL).

This sequence belongs to the ATPase A chain family. F-type ATPases have 2 components, CF(1) - the catalytic core - and CF(0) - the membrane proton channel. CF(1) has five subunits: alpha(3), beta(3), gamma(1), delta(1), epsilon(1). CF(0) has three main subunits: a(1), b(2) and c(9-12). The alpha and beta chains form an alternating ring which encloses part of the gamma chain. CF(1) is attached to CF(0) by a central stalk formed by the gamma and epsilon chains, while a peripheral stalk is formed by the delta and b chains.

It is found in the cell inner membrane. Functionally, key component of the proton channel; it plays a direct role in the translocation of protons across the membrane. The polypeptide is ATP synthase subunit a (Rhizobium etli (strain CIAT 652)).